The primary structure comprises 124 residues: MRVKGTNTTRIRRKKWLKQASGSFGTRKASFKAAKQTVIQASKYAYRDRRQKKREFRSLWILRLNAALRAQGMTYSVFINELKKAKIVINRKVLSELAIKEPNKLNLIINTIKKPTNKPTVAKT.

The protein belongs to the bacterial ribosomal protein bL20 family.

In terms of biological role, binds directly to 23S ribosomal RNA and is necessary for the in vitro assembly process of the 50S ribosomal subunit. It is not involved in the protein synthesizing functions of that subunit. This is Large ribosomal subunit protein bL20 (rplT) from Mycoplasma genitalium (strain ATCC 33530 / DSM 19775 / NCTC 10195 / G37) (Mycoplasmoides genitalium).